A 482-amino-acid chain; its full sequence is ATP-dependent RNA helicase DBP5 (482 aa).

The tract at residues 1–62 is disordered; the sequence is MSDTKRDPAD…KVEEKKTKQE (62 aa). Basic and acidic residues predominate over residues 17-62; sequence IDNEKEDTSEVSTKETVKSQPEKTADSIKPAEKLVPKVEEKKTKQE. 2 positions are modified to phosphoserine: S86 and S93. Residues 92-120 carry the Q motif motif; it reads KSFDELGLAPELLKGIYAMKFQKPSKIQE. The Helicase ATP-binding domain occupies 125 to 292; sequence LLLHNPPRNM…KKIVPNANTL (168 aa). 138–145 is an ATP binding site; the sequence is SQSGTGKT. The residue at position 162 (S162) is a Phosphoserine. Residues 239-242 carry the DEAD box motif; sequence DEAD. Residues 303-480 enclose the Helicase C-terminal domain; sequence AIKQLYMDCK…EVEKIVKKVL (178 aa).

It belongs to the DEAD box helicase family. DDX19/DBP5 subfamily. In terms of assembly, associates with the nuclear pore complex. Interacts with NUP159, GLE1, GFD1 and ZDS1. The interaction with NUP159 is necessary for the association to the nuclear pore complex. Also interacts with the TFIIH complex subunits TFB1, TFB2 and RAD3.

The protein localises to the cytoplasm. The protein resides in the nucleus. Its subcellular location is the nuclear pore complex. It localises to the nucleus membrane. The enzyme catalyses ATP + H2O = ADP + phosphate + H(+). ATP-dependent RNA helicase associated with the nuclear pore complex and essential for mRNA export from the nucleus. May participate in a terminal step of mRNA export through the removal of proteins that accompany mRNA through the nucleopore complex. May also be involved in early transcription. This chain is ATP-dependent RNA helicase DBP5 (DBP5), found in Saccharomyces cerevisiae (strain YJM789) (Baker's yeast).